Reading from the N-terminus, the 121-residue chain is Nitrogenase-stabilizing/protective protein NifW (121 aa).

The protein belongs to the NifW family. In terms of assembly, homotrimer; associates with NifD.

In terms of biological role, may protect the nitrogenase Fe-Mo protein from oxidative damage. The chain is Nitrogenase-stabilizing/protective protein NifW from Methylacidiphilum infernorum (isolate V4) (Methylokorus infernorum (strain V4)).